The sequence spans 1375 residues: MRDLLNFFDKPKDPLSFDAVRVSLASPEMIREWSFGEVKKPETINYRTFKPERDGLFCAKIFGPIKDYECLCGKYKRMKYRGVVCEKCGVEVTQTKVRRERLGHIELATPVAHIWFLRSLPSRIGNLLNLSLKDVEKVLYCEAHVVIDPMETTLEEGQVLTEEALQAALNEFGPSFKYGMGGEAVRDLLKKIDPEYLSRKLRLEVKDTKSEAGIKKLTKRLRVVEAFKGSINKPEWMMLEALPVLPPDLRPLVPLDGGRFATSDLNDLYRRVINRNNRLKRLQELNAPDIIIRNEKRMLQEAVDALLDNGRRGKTFTGPNKRPLRSLSDMLKGKQGRFRQNLLGKRVDYSGRSVITVGPTLRLHQCGLPKKMALELFKPFVYNKLEEKGLATTIKQAKRLVDQETVEVWDILADVVKEHPVLLNRAPTLHRLGIQAFEPVLHEGKAIQLHPLVCTAFNADFDGDQMAVHVPLSVESQVEARVLMMSTNNILSPANGKPIINPSQDIVLGMYWLTRMRPGAKGSGKAFSSVQEAQYAFETGLVDLQAVCKVRINGTLQETTVGRAILSDIVPKEVPFNEVNVTMGKKQIAALIDKTFRLAGAKATCILADKIMEYGFKYSTAAGMSIGIDDMVIPAAKAPMIADAEKQVTEIQQQYDEGLITDGERYNKVVDIWAQTADKIAKEGMNAIEKQTFNVNGKEVVGPSFNPIYIMADSGARGSAAQIRQLGGMRGLMAKPSGEIIETPITANFREGLTVIQYFISTHGARKGLADTALKTANSGYLTRRLVDVAQDVVVSEIDCGVEDGLEITPIYEAGEIVQNIGDRILGRTALKDVVDAATNEVVVRANQEITENDVKIIEGRGIDKVDIRSALICQSKRGVCVKCYGRDLSRGATVNLGETVGIIAAQSIGEPGTQLTMRTFHLGGAASRAVEQSVHTSRYDGVVKLQNVHAVTNRNGKLTVMNRNGSALVIDEAGRERENFKLVYGAVLNFKEGDKVAKGQTVAEWDPYSNPIIAEVSAKIQYQDIEEGSTMQEQVDAVTGFATKVIMESKSSDVKPTVFLVDGAGKTLNLPGRDIPARYLIPVGAQLLVADQQEVHAGDVIAKMHREASKTKDITGGLPRVAELFEARKPKEAAIISEIDGYVTFGKDVKGKQRVIVTPEVGEQKEYLIPKGKHVAVREGEYVRAGEALMDGPTNPHDILAVLGAKALSAYLVDEIQEVYRLQGVGINDKHIEVIVRQMLRKVEIRDAGDSRFLAGEQVERYAYMEENERINKEGGQPATCSPLLLGITKVSLSTDSWISAASFQETTKVLTEAAINSRTDHLRGLKENIIMGRLIPAGTGLTSYKRWKVSVHEDDDIGFVALPGMTSSVQPQG.

Residues C70, C72, C85, and C88 each coordinate Zn(2+). Residues D460, D462, and D464 each contribute to the Mg(2+) site. C800, C874, C881, and C884 together coordinate Zn(2+).

This sequence belongs to the RNA polymerase beta' chain family. As to quaternary structure, the RNAP catalytic core consists of 2 alpha, 1 beta, 1 beta' and 1 omega subunit. When a sigma factor is associated with the core the holoenzyme is formed, which can initiate transcription. Mg(2+) serves as cofactor. Zn(2+) is required as a cofactor.

The catalysed reaction is RNA(n) + a ribonucleoside 5'-triphosphate = RNA(n+1) + diphosphate. Functionally, DNA-dependent RNA polymerase catalyzes the transcription of DNA into RNA using the four ribonucleoside triphosphates as substrates. This Bdellovibrio bacteriovorus (strain ATCC 15356 / DSM 50701 / NCIMB 9529 / HD100) protein is DNA-directed RNA polymerase subunit beta'.